The chain runs to 508 residues: Photosystem II CP47 reaction center protein (508 aa).

6 helical membrane passes run 21 to 36 (AVHI…WAGS), 101 to 115 (IVFS…TWHW), 140 to 156 (GIHL…FGAF), 203 to 218 (VAAG…FHLS), 237 to 252 (VLSS…AFIV), and 457 to 472 (TFAL…HGAR).

It belongs to the PsbB/PsbC family. PsbB subfamily. As to quaternary structure, PSII is composed of 1 copy each of membrane proteins PsbA, PsbB, PsbC, PsbD, PsbE, PsbF, PsbH, PsbI, PsbJ, PsbK, PsbL, PsbM, PsbT, PsbX, PsbY, PsbZ, Psb30/Ycf12, at least 3 peripheral proteins of the oxygen-evolving complex and a large number of cofactors. It forms dimeric complexes. Binds multiple chlorophylls. PSII binds additional chlorophylls, carotenoids and specific lipids. serves as cofactor.

Its subcellular location is the plastid. It is found in the chloroplast thylakoid membrane. Functionally, one of the components of the core complex of photosystem II (PSII). It binds chlorophyll and helps catalyze the primary light-induced photochemical processes of PSII. PSII is a light-driven water:plastoquinone oxidoreductase, using light energy to abstract electrons from H(2)O, generating O(2) and a proton gradient subsequently used for ATP formation. This Welwitschia mirabilis (Tree tumbo) protein is Photosystem II CP47 reaction center protein.